The sequence spans 744 residues: Biotin sulfoxide reductase (744 aa).

Serine 121 is a binding site for Mo-bis(molybdopterin guanine dinucleotide).

The protein belongs to the prokaryotic molybdopterin-containing oxidoreductase family. Mo-bis(molybdopterin guanine dinucleotide) serves as cofactor.

Its function is as follows. This enzyme may serve as a scavenger, allowing the cell to utilize biotin sulfoxide as a biotin source. It reduces a spontaneous oxidation product of biotin, D-biotin D-sulfoxide (BSO or BDS), back to biotin. The sequence is that of Biotin sulfoxide reductase from Cereibacter sphaeroides (Rhodobacter sphaeroides).